The following is a 520-amino-acid chain: Retinoic acid receptor RXR-beta (520 aa).

Residues 1–167 are disordered; that stretch reads MSWATRPPFL…GGSGPPEDVK (167 aa). The tract at residues 1 to 191 is modulating; the sequence is MSWATRPPFL…PGGPGAGKRL (191 aa). Omega-N-methylarginine is present on R25. Over residues 64 to 79 the composition is skewed to basic and acidic residues; the sequence is EAGRDGMGDSGRDSRS. Residues 95 to 118 show a composition bias toward pro residues; that stretch reads SSPPGPPLTPSAPPPPMPPPPLGS. Positions 119–130 are enriched in low complexity; that stretch reads PFPVISSSMGSP. Pro residues predominate over residues 131-140; that stretch reads GLPPPAPPGF. NR C4-type zinc fingers lie at residues 192–212 and 228–252; these read CAIC…CEGC and CRDN…YQKC. A DNA-binding region (nuclear receptor) is located at residues 192–257; it reads CAICGDRSSG…RYQKCLATGM (66 aa). Positions 258–382 are hinge; that stretch reads KREAVQEERQ…HRSIDVRDGI (125 aa). Over residues 263–275 the composition is skewed to basic and acidic residues; that stretch reads QEERQRGKDKDGD. 2 disordered regions span residues 263–285 and 300–323; these read QEER…APEE and QKSD…NDPV. The region spanning 283 to 516 is the NR LBD domain; the sequence is PEEMPVDRIL…TFLMEMLEAP (234 aa). A compositionally biased stretch (gly residues) spans 307–317; that stretch reads EGPGATGGGGS.

The protein belongs to the nuclear hormone receptor family. NR2 subfamily. In terms of assembly, homodimer (in vitro). Heterodimer with other retinoic acid receptor family members. Binds DNA preferentially as a RAR/RXR heterodimer. Interacts with NR1H3. Interacts with AKAP13. In terms of tissue distribution, in all tissues tested, including brain, thymus, spleen and liver.

It is found in the nucleus. Its subcellular location is the cytoplasm. Its function is as follows. Receptor for retinoic acid. Retinoic acid receptors bind as heterodimers to their target response elements in response to their ligands, all-trans or 9-cis retinoic acid, and regulate gene expression in various biological processes. The RAR/RXR heterodimers bind to the retinoic acid response elements (RARE). This is Retinoic acid receptor RXR-beta (Rxrb) from Mus musculus (Mouse).